Here is a 101-residue protein sequence, read N- to C-terminus: Urease subunit beta (101 aa).

This sequence belongs to the urease beta subunit family. Heterotrimer of UreA (gamma), UreB (beta) and UreC (alpha) subunits. Three heterotrimers associate to form the active enzyme.

Its subcellular location is the cytoplasm. The catalysed reaction is urea + 2 H2O + H(+) = hydrogencarbonate + 2 NH4(+). The protein operates within nitrogen metabolism; urea degradation; CO(2) and NH(3) from urea (urease route): step 1/1. The chain is Urease subunit beta from Rhizobium meliloti (strain 1021) (Ensifer meliloti).